Reading from the N-terminus, the 404-residue chain is Cysteine desulfurase IscS (404 aa).

Residues 75–76, Asn-155, Gln-183, and 203–205 contribute to the pyridoxal 5'-phosphate site; these read AT and SGH. Lys-206 is subject to N6-(pyridoxal phosphate)lysine. Thr-243 is a binding site for pyridoxal 5'-phosphate. Catalysis depends on Cys-328, which acts as the Cysteine persulfide intermediate. Cys-328 lines the [2Fe-2S] cluster pocket.

It belongs to the class-V pyridoxal-phosphate-dependent aminotransferase family. NifS/IscS subfamily. Homodimer. Forms a heterotetramer with IscU, interacts with other sulfur acceptors. Pyridoxal 5'-phosphate serves as cofactor.

Its subcellular location is the cytoplasm. The catalysed reaction is (sulfur carrier)-H + L-cysteine = (sulfur carrier)-SH + L-alanine. Its pathway is cofactor biosynthesis; iron-sulfur cluster biosynthesis. Master enzyme that delivers sulfur to a number of partners involved in Fe-S cluster assembly, tRNA modification or cofactor biosynthesis. Catalyzes the removal of elemental sulfur atoms from cysteine to produce alanine. Functions as a sulfur delivery protein for Fe-S cluster synthesis onto IscU, an Fe-S scaffold assembly protein, as well as other S acceptor proteins. This Shewanella sp. (strain ANA-3) protein is Cysteine desulfurase IscS.